Here is a 347-residue protein sequence, read N- to C-terminus: Eukaryotic translation initiation factor 3 subunit H (347 aa).

The 142-residue stretch at 1–142 (MKIMKHCSQT…LRAFRLSPRF (142 aa)) folds into the MPN domain.

It belongs to the eIF-3 subunit H family. Component of the eukaryotic translation initiation factor 3 (eIF-3) complex.

The protein resides in the cytoplasm. Functionally, component of the eukaryotic translation initiation factor 3 (eIF-3) complex, which is involved in protein synthesis of a specialized repertoire of mRNAs and, together with other initiation factors, stimulates binding of mRNA and methionyl-tRNAi to the 40S ribosome. The eIF-3 complex specifically targets and initiates translation of a subset of mRNAs involved in cell proliferation. This Neosartorya fischeri (strain ATCC 1020 / DSM 3700 / CBS 544.65 / FGSC A1164 / JCM 1740 / NRRL 181 / WB 181) (Aspergillus fischerianus) protein is Eukaryotic translation initiation factor 3 subunit H.